The chain runs to 449 residues: Elongation factor 1-alpha 1 (449 aa).

Positions 5-230 constitute a tr-type G domain; the sequence is KFHINIVVIG…DQINEPKRPS (226 aa). The tract at residues 14-21 is G1; it reads GHVDSGKS. Position 14–21 (14–21) interacts with GTP; sequence GHVDSGKS. Position 55 is an N6,N6-dimethyllysine (lysine 55). The interval 70–74 is G2; the sequence is GITID. Lysine 79 carries the N6,N6,N6-trimethyllysine modification. A G3 region spans residues 91–94; sequence DAPG. GTP contacts are provided by residues 91–95 and 153–156; these read DAPGH and NKMD. Positions 153-156 are G4; that stretch reads NKMD. Lysine 187 carries the post-translational modification N6,N6,N6-trimethyllysine. The tract at residues 194–196 is G5; the sequence is SGF. An N6-methyllysine modification is found at lysine 261. An N6,N6,N6-trimethyllysine mark is found at lysine 306 and lysine 396. Residues lysine 438 and lysine 441 each participate in a glycyl lysine isopeptide (Lys-Gly) (interchain with G-Cter in ubiquitin) cross-link.

Belongs to the TRAFAC class translation factor GTPase superfamily. Classic translation factor GTPase family. EF-Tu/EF-1A subfamily.

Its subcellular location is the cytoplasm. Its function is as follows. This protein promotes the GTP-dependent binding of aminoacyl-tRNA to the A-site of ribosomes during protein biosynthesis. The sequence is that of Elongation factor 1-alpha 1 (A1) from Arabidopsis thaliana (Mouse-ear cress).